We begin with the raw amino-acid sequence, 143 residues long: Transcriptional regulator MraZ (143 aa).

SpoVT-AbrB domains lie at 5–47 (EYHH…PMQG) and 76–119 (ATEC…SRSR).

This sequence belongs to the MraZ family. Forms oligomers.

It localises to the cytoplasm. The protein localises to the nucleoid. This is Transcriptional regulator MraZ from Moorella thermoacetica (strain ATCC 39073 / JCM 9320).